Reading from the N-terminus, the 505-residue chain is MLSLTIKELVSHFKAKKCSPVDICATCIKEINDSSFLNAFVTVLPEAAEKQARESHARWKSGKPRGPLDGVPIAVKDNFCMTGVRTTCGSRMLANFYPPYTATVVERLQGEGAVVLGKTNMDEFGMGSGATDSAFGPTKNPWKNAGEAADDWYITGGSSGGSAVAVATGCSFGALGSDTGGSTRNPASRCGVVGLKPTYGALSRHGLIPLTNSMDVPGILAKCVDDAAVLLSATACADPNDSTSVSAPDSVRHLKLAGEPSLKGVKIGVPKEYHCPGMCPEVLDLWRDVADRLAALGAVVSSVSLPHSRYSTECYSVLNCCEVASNFARYDGLEYGHRASDDSSTDALYAASRHEGLNEVVRGRILAGNYFLLRANYEKYFTKALQVRRLISDDFTKVFASGVELLLTPVTLTAALRHSEWTLKDNRERASVEDFCTQPVNMAGLPAVSVPCRLSREGLPLSLQLVGPKFSEAAMLAAAKRLELELSFPRLDLQLHAHQESYATL.

Active-site charge relay system residues include lysine 76 and serine 158. The active-site Acyl-ester intermediate is serine 182.

The protein belongs to the amidase family. GatA subfamily. Subunit of the heterotrimeric GatCAB amidotransferase (AdT) complex, composed of A, B and C subunits.

It is found in the mitochondrion. It carries out the reaction L-glutamyl-tRNA(Gln) + L-glutamine + ATP + H2O = L-glutaminyl-tRNA(Gln) + L-glutamate + ADP + phosphate + H(+). Functionally, allows the formation of correctly charged Gln-tRNA(Gln) through the transamidation of misacylated Glu-tRNA(Gln) in the mitochondria. The reaction takes place in the presence of glutamine and ATP through an activated gamma-phospho-Glu-tRNA(Gln). This chain is Glutamyl-tRNA(Gln) amidotransferase subunit A, mitochondrial, found in Ixodes scapularis (Black-legged tick).